Here is a 251-residue protein sequence, read N- to C-terminus: GTP cyclohydrolase 1 type 2 homolog (251 aa).

A divalent metal cation contacts are provided by histidine 64, histidine 65, aspartate 102, histidine 219, and glutamate 223.

It belongs to the GTP cyclohydrolase I type 2/NIF3 family. Homohexamer.

The sequence is that of GTP cyclohydrolase 1 type 2 homolog from Chlamydia muridarum (strain MoPn / Nigg).